A 421-amino-acid polypeptide reads, in one-letter code: UDP-N-acetylglucosamine 1-carboxyvinyltransferase (421 aa).

Residue 22 to 23 participates in phosphoenolpyruvate binding; that stretch reads KN. Arg-92 lines the UDP-N-acetyl-alpha-D-glucosamine pocket. Catalysis depends on Cys-116, which acts as the Proton donor. 2-(S-cysteinyl)pyruvic acid O-phosphothioketal is present on Cys-116. 2 residues coordinate UDP-N-acetyl-alpha-D-glucosamine: Asp-306 and Val-328.

Belongs to the EPSP synthase family. MurA subfamily.

Its subcellular location is the cytoplasm. The enzyme catalyses phosphoenolpyruvate + UDP-N-acetyl-alpha-D-glucosamine = UDP-N-acetyl-3-O-(1-carboxyvinyl)-alpha-D-glucosamine + phosphate. It participates in cell wall biogenesis; peptidoglycan biosynthesis. Functionally, cell wall formation. Adds enolpyruvyl to UDP-N-acetylglucosamine. This Thermotoga petrophila (strain ATCC BAA-488 / DSM 13995 / JCM 10881 / RKU-1) protein is UDP-N-acetylglucosamine 1-carboxyvinyltransferase.